A 194-amino-acid polypeptide reads, in one-letter code: Probable molybdenum cofactor guanylyltransferase (194 aa).

GTP is bound by residues 8–10, lysine 20, and aspartate 99; that span reads LAG. Aspartate 99 is a binding site for Mg(2+).

It belongs to the MobA family. It depends on Mg(2+) as a cofactor.

It localises to the cytoplasm. The enzyme catalyses Mo-molybdopterin + GTP + H(+) = Mo-molybdopterin guanine dinucleotide + diphosphate. Functionally, transfers a GMP moiety from GTP to Mo-molybdopterin (Mo-MPT) cofactor (Moco or molybdenum cofactor) to form Mo-molybdopterin guanine dinucleotide (Mo-MGD) cofactor. In Synechococcus elongatus (strain ATCC 33912 / PCC 7942 / FACHB-805) (Anacystis nidulans R2), this protein is Probable molybdenum cofactor guanylyltransferase.